The sequence spans 190 residues: MNNYIFIVSAPSGAGKSSLLKAFLATDIGKDNYAVAISHTTREPRVGEINSREYYFVTVAEFEQLLSQDGFIEYAKVFKNYYGTSKAELDRLLALGKNIILEIDWQGAQQTRAIYGDRAKSIFILPPSLDELRKRLEKRNTDSKETIDYRMEQAQSEISHADEYDYLLVNDDFSQSLEQFCKYFEQNIQS.

In terms of domain architecture, Guanylate kinase-like spans asparagine 3–glutamate 185. Residue alanine 10–serine 17 coordinates ATP.

This sequence belongs to the guanylate kinase family.

It is found in the cytoplasm. It catalyses the reaction GMP + ATP = GDP + ADP. Its function is as follows. Essential for recycling GMP and indirectly, cGMP. This Francisella tularensis subsp. tularensis (strain FSC 198) protein is Guanylate kinase.